The chain runs to 760 residues: Leucine-rich repeat extensin-like protein 3 (760 aa).

An N-terminal signal peptide occupies residues 1 to 20 (MKKTIQILLFFFFLINLTNA). The N-linked (GlcNAc...) asparagine glycan is linked to Asn16. The LRR 1 repeat unit spans residues 21 to 45 (LSISSDGGVLSDNEVRHIQRRQLLE). N-linked (GlcNAc...) asparagine glycosylation is found at Asn86 and Asn98. LRR repeat units follow at residues 113–137 (IRTV…LGLL), 138–160 (SDLA…RFNR), 161–185 (LKLL…VLQL), 186–209 (PSLK…LFSK), 211–232 (LDAI…FGDS), 234–255 (VSVI…LVEM), 256–279 (KNLN…IGRL), 281–303 (NVTV…VGEM), and 304–327 (VSVE…ICQL). An N-linked (GlcNAc...) asparagine glycan is attached at Asn281. Asn332 carries N-linked (GlcNAc...) asparagine glycosylation. 3 disordered regions span residues 389-502 (GRSV…PPPP), 515-610 (PPVY…YSPP), and 663-748 (PPPP…PVIG). 2 stretches are compositionally biased toward pro residues: residues 394 to 415 (PRPP…PPAP) and 423 to 502 (LTSP…PPPP). Positions 409-758 (SPPPPAPIFS…VSYASPPPPP (350 aa)) are contains the Ser-Pro(4) repeats. Positions 663 to 745 (PPPPVHYSSP…SPEYEGPLPP (83 aa)) are enriched in pro residues.

In terms of assembly, interacts with SH3P1. In terms of processing, hydroxylated on proline residues in the S-P-P-P-P repeat. Post-translationally, O-glycosylated on hydroxyprolines. In terms of tissue distribution, expressed in roots, stems, leaves and flowers, mostly in vascular tissues.

It localises to the secreted. The protein resides in the cell wall. Functionally, modulates cell morphogenesis by regulating cell wall formation and assembly, and/or growth polarization. The chain is Leucine-rich repeat extensin-like protein 3 (LRX3) from Arabidopsis thaliana (Mouse-ear cress).